A 276-amino-acid chain; its full sequence is Octanoyltransferase LipM (276 aa).

Positions 32-247 (GEVAPTLRFY…GFEDALQLTF (216 aa)) constitute a BPL/LPL catalytic domain. The active-site Acyl-thioester intermediate is C149.

Belongs to the octanoyltransferase LipM family. As to quaternary structure, monomer.

The enzyme catalyses octanoyl-[ACP] + L-lysyl-[protein] = N(6)-octanoyl-L-lysyl-[protein] + holo-[ACP] + H(+). Its pathway is protein modification; protein lipoylation via endogenous pathway; protein N(6)-(lipoyl)lysine from octanoyl-[acyl-carrier-protein]. Catalyzes the transfer of endogenously produced octanoic acid from octanoyl-acyl-carrier-protein onto the lipoyl domain of GcvH, an intermediate carrier during protein lipoylation. This is Octanoyltransferase LipM from Exiguobacterium sibiricum (strain DSM 17290 / CCUG 55495 / CIP 109462 / JCM 13490 / 255-15).